We begin with the raw amino-acid sequence, 330 residues long: Type II restriction enzyme Cfr9I (330 aa).

It belongs to the XcyI type II restriction endonuclease family. It depends on Mg(2+) as a cofactor.

The catalysed reaction is Endonucleolytic cleavage of DNA to give specific double-stranded fragments with terminal 5'-phosphates.. Functionally, an E and P subtype restriction enzyme that recognizes the double-stranded sequence 5'-CCCGGG-3' and cleaves after C-1. The polypeptide is Type II restriction enzyme Cfr9I (cfr9IR) (Citrobacter freundii).